Consider the following 555-residue polypeptide: Glutamate--tRNA ligase (555 aa).

Residues 100-110 carry the 'HIGH' region motif; the sequence is PNPSGPLHIGH.

Belongs to the class-I aminoacyl-tRNA synthetase family. Glutamate--tRNA ligase type 2 subfamily.

It localises to the cytoplasm. The enzyme catalyses tRNA(Glu) + L-glutamate + ATP = L-glutamyl-tRNA(Glu) + AMP + diphosphate. Its function is as follows. Catalyzes the attachment of glutamate to tRNA(Glu) in a two-step reaction: glutamate is first activated by ATP to form Glu-AMP and then transferred to the acceptor end of tRNA(Glu). The chain is Glutamate--tRNA ligase from Methanococcus maripaludis (strain C6 / ATCC BAA-1332).